Reading from the N-terminus, the 537-residue chain is Woronin body major protein hexA (537 aa).

3 stretches are compositionally biased toward basic and acidic residues: residues 1 to 17 (MYSVESKFERDSRRDAQ), 59 to 70 (DRTSHVEREDTR), and 116 to 134 (DSRVPEVELSRERWKRSEN). 4 disordered regions span residues 1 to 20 (MYSVESKFERDSRRDAQRTA), 59 to 79 (DRTSHVEREDTRTSAPLPDPR), 116 to 200 (DSRV…KPVY), and 269 to 295 (PKPLETRKGDSFSRSELTVESVPSRPS). Positions 135 to 144 (NAKQNKNKNN) are enriched in low complexity. Positions 272 to 281 (LETRKGDSFS) are enriched in basic and acidic residues.

It belongs to the eIF-5A family. Hex1 subfamily. Forms oligomers. Self-assembles into hexagonal rods. Binds directly or indirectly to the Woronin body tether lah.

Its subcellular location is the cell septum. The protein resides in the cytoplasm. In terms of biological role, major component of Woronin bodies, fungal-specific organelles that occlude septal pores in order to separate intact from damaged compartments. HexA binds directly or indirectly to the Woronin body tether that in turn is anchored at the rim of the septal pore. Woronin bodies are important for stress resistance and virulence. The polypeptide is Woronin body major protein hexA (Aspergillus fumigatus (strain ATCC MYA-4609 / CBS 101355 / FGSC A1100 / Af293) (Neosartorya fumigata)).